The following is a 500-amino-acid chain: Cytochrome P450 2D15 (500 aa).

Residue C446 participates in heme binding.

It belongs to the cytochrome P450 family. Heme serves as cofactor. In terms of tissue distribution, liver. Also detected in several other tissues.

It is found in the endoplasmic reticulum membrane. It localises to the microsome membrane. The enzyme catalyses an organic molecule + reduced [NADPH--hemoprotein reductase] + O2 = an alcohol + oxidized [NADPH--hemoprotein reductase] + H2O + H(+). Its function is as follows. High activity for the hydroxylation of bunitrolol and imipramine; low activity on debrisoquine. The polypeptide is Cytochrome P450 2D15 (CYP2D15) (Canis lupus familiaris (Dog)).